A 612-amino-acid chain; its full sequence is Dihydroxy-acid dehydratase (612 aa).

D81 is a binding site for Mg(2+). C122 contributes to the [2Fe-2S] cluster binding site. The Mg(2+) site is built by D123 and K124. K124 carries the post-translational modification N6-carboxylysine. C195 contacts [2Fe-2S] cluster. Mg(2+) is bound at residue E491. Catalysis depends on S517, which acts as the Proton acceptor.

Belongs to the IlvD/Edd family. As to quaternary structure, homodimer. [2Fe-2S] cluster is required as a cofactor. Mg(2+) serves as cofactor.

It catalyses the reaction (2R)-2,3-dihydroxy-3-methylbutanoate = 3-methyl-2-oxobutanoate + H2O. The enzyme catalyses (2R,3R)-2,3-dihydroxy-3-methylpentanoate = (S)-3-methyl-2-oxopentanoate + H2O. It functions in the pathway amino-acid biosynthesis; L-isoleucine biosynthesis; L-isoleucine from 2-oxobutanoate: step 3/4. The protein operates within amino-acid biosynthesis; L-valine biosynthesis; L-valine from pyruvate: step 3/4. Functionally, functions in the biosynthesis of branched-chain amino acids. Catalyzes the dehydration of (2R,3R)-2,3-dihydroxy-3-methylpentanoate (2,3-dihydroxy-3-methylvalerate) into 2-oxo-3-methylpentanoate (2-oxo-3-methylvalerate) and of (2R)-2,3-dihydroxy-3-methylbutanoate (2,3-dihydroxyisovalerate) into 2-oxo-3-methylbutanoate (2-oxoisovalerate), the penultimate precursor to L-isoleucine and L-valine, respectively. This Psychromonas ingrahamii (strain DSM 17664 / CCUG 51855 / 37) protein is Dihydroxy-acid dehydratase.